The chain runs to 386 residues: Chaperone protein DnaJ (386 aa).

In terms of domain architecture, J spans 4–68 (NFYDVLGVSR…QKRQQYDQLG (65 aa)). Composition is skewed to basic and acidic residues over residues 22-35 (KAYR…HPDV) and 43-79 (ERFK…DKRG). Residues 22 to 132 (KAYRKQAAEH…GGNRPRQGQD (111 aa)) are disordered. 2 stretches are compositionally biased toward gly residues: residues 80–104 (ATGG…GAGG) and 113–125 (FGGG…GGGN). The CR-type zinc finger occupies 147–229 (GATKEVTLTR…CGGDGVVREE (83 aa)). Positions 160, 163, 177, 180, 203, 206, 217, and 220 each coordinate Zn(2+). 4 CXXCXGXG motif repeats span residues 160 to 167 (CDTCDGAG), 177 to 184 (CSQCNGRG), 203 to 210 (CPRCEGSG), and 217 to 224 (CADCGGDG).

It belongs to the DnaJ family. In terms of assembly, homodimer. It depends on Zn(2+) as a cofactor.

The protein resides in the cytoplasm. Participates actively in the response to hyperosmotic and heat shock by preventing the aggregation of stress-denatured proteins and by disaggregating proteins, also in an autonomous, DnaK-independent fashion. Unfolded proteins bind initially to DnaJ; upon interaction with the DnaJ-bound protein, DnaK hydrolyzes its bound ATP, resulting in the formation of a stable complex. GrpE releases ADP from DnaK; ATP binding to DnaK triggers the release of the substrate protein, thus completing the reaction cycle. Several rounds of ATP-dependent interactions between DnaJ, DnaK and GrpE are required for fully efficient folding. Also involved, together with DnaK and GrpE, in the DNA replication of plasmids through activation of initiation proteins. The protein is Chaperone protein DnaJ of Halorubrum lacusprofundi (strain ATCC 49239 / DSM 5036 / JCM 8891 / ACAM 34).